A 278-amino-acid chain; its full sequence is Trehalose/maltose transport system permease protein MalG (278 aa).

The next 6 membrane-spanning stretches (helical) occupy residues 12–32 (IIGA…MIVV), 74–94 (IIIA…AAYA), 106–126 (IPIF…GYLF), 141–161 (LYFP…LSYF), 186–206 (IILP…FIAA), and 242–262 (GSVM…ALLF). The ABC transmembrane type-1 domain maps to 70 to 262 (LKNSIIIASL…IPLVIMALLF (193 aa)).

It belongs to the binding-protein-dependent transport system permease family. As to quaternary structure, the complex is composed of two ATP-binding proteins (MalK), two transmembrane proteins (MalG and MalF) and a solute-binding protein (MalE).

Its subcellular location is the cell membrane. In terms of biological role, part of the ABC transporter complex MalEFGK involved in trehalose/maltose import. Responsible for the translocation of the substrate across the membrane. The protein is Trehalose/maltose transport system permease protein MalG (malG) of Thermococcus litoralis (strain ATCC 51850 / DSM 5473 / JCM 8560 / NS-C).